Consider the following 388-residue polypeptide: D-alanyl-D-alanine carboxypeptidase DacD (388 aa).

The N-terminal stretch at 1-21 is a signal peptide; the sequence is MKRRLIIAASLFVFNLSSGFA. The Acyl-ester intermediate role is filled by S63. K66 serves as the catalytic Proton acceptor. S129 is an active-site residue. K232 is a binding site for substrate.

The protein belongs to the peptidase S11 family.

The protein localises to the cell inner membrane. It catalyses the reaction Preferential cleavage: (Ac)2-L-Lys-D-Ala-|-D-Ala. Also transpeptidation of peptidyl-alanyl moieties that are N-acyl substituents of D-alanine.. It functions in the pathway cell wall biogenesis; peptidoglycan biosynthesis. Removes C-terminal D-alanyl residues from sugar-peptide cell wall precursors. In Escherichia coli (strain K12), this protein is D-alanyl-D-alanine carboxypeptidase DacD (dacD).